The chain runs to 558 residues: Dihydroxy-acid dehydratase (558 aa).

Residue Cys-49 coordinates [2Fe-2S] cluster. Asp-81 contributes to the Mg(2+) binding site. Cys-122 is a binding site for [2Fe-2S] cluster. 2 residues coordinate Mg(2+): Asp-123 and Lys-124. Lys-124 bears the N6-carboxylysine mark. Position 194 (Cys-194) interacts with [2Fe-2S] cluster. Glu-446 serves as a coordination point for Mg(2+). Residue Ser-472 is the Proton acceptor of the active site.

It belongs to the IlvD/Edd family. As to quaternary structure, homodimer. The cofactor is [2Fe-2S] cluster. It depends on Mg(2+) as a cofactor.

It catalyses the reaction (2R)-2,3-dihydroxy-3-methylbutanoate = 3-methyl-2-oxobutanoate + H2O. The enzyme catalyses (2R,3R)-2,3-dihydroxy-3-methylpentanoate = (S)-3-methyl-2-oxopentanoate + H2O. It participates in amino-acid biosynthesis; L-isoleucine biosynthesis; L-isoleucine from 2-oxobutanoate: step 3/4. Its pathway is amino-acid biosynthesis; L-valine biosynthesis; L-valine from pyruvate: step 3/4. Functionally, functions in the biosynthesis of branched-chain amino acids. Catalyzes the dehydration of (2R,3R)-2,3-dihydroxy-3-methylpentanoate (2,3-dihydroxy-3-methylvalerate) into 2-oxo-3-methylpentanoate (2-oxo-3-methylvalerate) and of (2R)-2,3-dihydroxy-3-methylbutanoate (2,3-dihydroxyisovalerate) into 2-oxo-3-methylbutanoate (2-oxoisovalerate), the penultimate precursor to L-isoleucine and L-valine, respectively. This chain is Dihydroxy-acid dehydratase, found in Synechococcus sp. (strain RCC307).